The primary structure comprises 486 residues: 23S rRNA (uracil(1939)-C(5))-methyltransferase RlmD (486 aa).

The region spanning 10 to 71 is the TRAM domain; it reads TVKAPEYLPD…SSFEKAVVMA (62 aa). Positions 84, 94, 97, and 176 each coordinate [4Fe-4S] cluster. Gln285, Phe314, Asn319, Glu335, Asn370, and Asp391 together coordinate S-adenosyl-L-methionine. Cys442 functions as the Nucleophile in the catalytic mechanism.

This sequence belongs to the class I-like SAM-binding methyltransferase superfamily. RNA M5U methyltransferase family. RlmD subfamily.

It catalyses the reaction uridine(1939) in 23S rRNA + S-adenosyl-L-methionine = 5-methyluridine(1939) in 23S rRNA + S-adenosyl-L-homocysteine + H(+). Catalyzes the formation of 5-methyl-uridine at position 1939 (m5U1939) in 23S rRNA. This is 23S rRNA (uracil(1939)-C(5))-methyltransferase RlmD from Polaromonas sp. (strain JS666 / ATCC BAA-500).